A 182-amino-acid chain; its full sequence is CKLF-like MARVEL transmembrane domain-containing protein 3 (182 aa).

The segment covering 1-12 (MWPPDPDPDPDP) has biased composition (acidic residues). Positions 1 to 21 (MWPPDPDPDPDPEPAGGSRPG) are disordered. In terms of domain architecture, MARVEL spans 36–155 (FLCSLKGRLL…DFYLIFNDVA (120 aa)). 3 consecutive transmembrane segments (helical) span residues 64–84 (ASAFLTAPLLEFLLALYFLFA), 101–121 (MDFLRCVTAALIYFAISITAI), and 131–151 (AAGVFGFFATIVFATDFYLIF).

This sequence belongs to the chemokine-like factor family. As to expression, expressed in the leukocytes, placenta and testis.

The protein resides in the membrane. This chain is CKLF-like MARVEL transmembrane domain-containing protein 3 (CMTM3), found in Homo sapiens (Human).